The following is a 29-amino-acid chain: Chassatide C1 (29 aa).

Residues 1 to 29 constitute a cross-link (cyclopeptide (Gly-Asn)); it reads GDACGETCFTGICFTAGCSCNPWPTCTRN. Intrachain disulfides connect Cys4/Cys18, Cys8/Cys20, and Cys13/Cys26.

This is a cyclic peptide. As to expression, expressed in leaf, fruit, pedical and stem but not in root (at protein level).

Its function is as follows. Probably participates in a plant defense mechanism. The sequence is that of Chassatide C1 from Chassalia chartacea (Chassalia curviflora).